The following is a 629-amino-acid chain: tRNA uridine 5-carboxymethylaminomethyl modification enzyme MnmG (629 aa).

Residues 13–18 (GGGHAG), Val125, and Ser180 contribute to the FAD site. 273–287 (GPRYCPSIEDKIHRF) contacts NAD(+). FAD is bound at residue Gln370.

This sequence belongs to the MnmG family. In terms of assembly, homodimer. Heterotetramer of two MnmE and two MnmG subunits. Requires FAD as cofactor.

Its subcellular location is the cytoplasm. NAD-binding protein involved in the addition of a carboxymethylaminomethyl (cmnm) group at the wobble position (U34) of certain tRNAs, forming tRNA-cmnm(5)s(2)U34. The sequence is that of tRNA uridine 5-carboxymethylaminomethyl modification enzyme MnmG from Shewanella sp. (strain ANA-3).